The primary structure comprises 385 residues: Palmitoyl-[acyl-carrier-protein] 4-desaturase, chloroplastic (385 aa).

The transit peptide at 1–36 (MAMKLNALMTLQCPKRNMFTRIAPPQAGRVRSKVSM) directs the protein to the chloroplast. Residues E126, E164, H167, E217, E250, and H253 each coordinate Fe cation.

Belongs to the fatty acid desaturase type 2 family. In terms of assembly, homodimer. Requires Fe(2+) as cofactor. In terms of tissue distribution, found only in tissues which synthesize petroselinic acid, such as developing seeds.

It is found in the plastid. The protein resides in the chloroplast. The enzyme catalyses hexadecanoyl-[ACP] + 2 reduced [2Fe-2S]-[ferredoxin] + O2 + 2 H(+) = (4Z)-hexadecenoyl-[ACP] + 2 oxidized [2Fe-2S]-[ferredoxin] + 2 H2O. Functionally, converts palmitoyl-ACP to (4Z)-hexadec-4-enoyl-ACP by introduction of a cis double bond between carbons 4 and 5 of the acyl chain. This is Palmitoyl-[acyl-carrier-protein] 4-desaturase, chloroplastic from Coriandrum sativum (Coriander).